Reading from the N-terminus, the 85-residue chain is UPF0473 protein CPR_1590 (85 aa).

This sequence belongs to the UPF0473 family.

This chain is UPF0473 protein CPR_1590, found in Clostridium perfringens (strain SM101 / Type A).